A 366-amino-acid chain; its full sequence is Homer protein homolog 1 (366 aa).

Gly2 is subject to N-acetylglycine. Residues 2-110 (GEQPIFSTRA…EKFQEFKEAA (109 aa)) form the WH1 domain. The interval 114–189 (KEKSQEKMEL…RTQALSHASS (76 aa)) is disordered. Polar residues-rich tracts occupy residues 138 to 147 (SPLTPESING) and 155 to 170 (DVTQ…TQNA). Positions 193–364 (KHWEAELATL…LRDNLAKLLE (172 aa)) form a coiled coil. A required for tetramerization region spans residues 302–366 (KLQEVEIRNK…DNLAKLLECS (65 aa)). Position 318 is a phosphoserine (Ser318).

The protein belongs to the Homer family. Tetramer; this tetrameric structure is critical for forming the high-order complex with SHANK1, which in turn is necessary for the structural and functional integrity of dendritic spines. Isoform 1, isoform 2 and isoform 3 encode a coiled-coil structure that mediates homo- and heteromultimerization. Interacts with GRM1, GRM5, ITPR1, DNM3, RYR1, RYR2 and SHANK3. Interacts with IFT57 and OPHN1. Interacts with SHANK1; forms high-order polymerized complex with a mesh-like network structure, at least composed of SHANK1, HOMER1 and DLGAP1; the complex formation is SHANK1 multimerization dependent. Interacts with NFATC4. Interacts with DAGLA (via PPXXF motif); this interaction is required for the cell membrane localization of DAGLA. Interacts with SRGAP2. In terms of tissue distribution, expressed in skeletal muscle at the level of the Z line, in the forebrain and cerebellum. As to expression, expressed in cardiac and skeletal muscle. Expressed in the hippocampus. In terms of tissue distribution, expressed in skeletal muscle at the level of the Z line, in the heart, forebrain and cerebellum.

It is found in the cytoplasm. It localises to the postsynaptic density. The protein resides in the synapse. Its subcellular location is the cell projection. The protein localises to the dendritic spine. In terms of biological role, postsynaptic density scaffolding protein. Binds and cross-links cytoplasmic regions of GRM1, GRM5, ITPR1, DNM3, RYR1, RYR2, SHANK1 and SHANK3. By physically linking GRM1 and GRM5 with ER-associated ITPR1 receptors, it aids the coupling of surface receptors to intracellular calcium release. May also couple GRM1 to PI3 kinase through its interaction with AGAP2. Isoform 1 regulates the trafficking and surface expression of GRM5. Differentially regulates the functions of the calcium activated channel ryanodine receptors RYR1 and RYR2. Isoform 1 decreases the activity of RYR2, and increases the activity of RYR1, whereas isoform 5 counteracts the effects by competing for binding sites. Isoform 3 regulates the trafficking and surface expression of GRM5. Isoform 5 acts as a natural dominant negative, in dynamic competition with constitutively expressed isoform 1, isoform 2 and isoform 3 to regulate synaptic metabotropic glutamate function. Isoform 5, may be involved in the structural changes that occur at synapses during long-lasting neuronal plasticity and development. Forms a high-order complex with SHANK1, which in turn is necessary for the structural and functional integrity of dendritic spines. Negatively regulates T cell activation by inhibiting the calcineurin-NFAT pathway. Acts by competing with calcineurin/PPP3CA for NFAT protein binding, hence preventing NFAT activation by PPP3CA. The chain is Homer protein homolog 1 from Mus musculus (Mouse).